Reading from the N-terminus, the 84-residue chain is Agaphelin (84 aa).

The first 26 residues, 1-26, serve as a signal peptide directing secretion; that stretch reads MKMRVHLLAVSVLLVVLALQTTPAEA. One can recognise a Kazal-like domain in the interval 29–82; the sequence is NSEMATCACQLIYRPVCASNNESYSNECVLKCASETPTGRSIGLHKVKDGNCNG. Intrachain disulfides connect Cys-35/Cys-60, Cys-37/Cys-56, and Cys-45/Cys-80. N-linked (GlcNAc...) asparagine glycosylation occurs at Asn-49.

As to quaternary structure, interacts with human ELANE.

It is found in the secreted. Functions as a slow and tight inhibitor of host neutrophil elastase (ELANE). Inhibits host proteinase 3 (PRTN3) and chymotrypsin. Does not inhibit other host proteases involved in coagulation or inflammation, such as cathepsin G (CTSG), trypsin, chymase, matriptase, beta-tryptase, kallikrein, urokinase-type plasminogen activator (PLAU), coagulation factors Xa (F10), XIa (F11), XIIa (F12), plasmin (PLG), thrombin (F2) and tissue-type plasminogen activator (PLAT). Inhibits host neutrophil chemotaxis induced by N-formylmethionine-leucyl-phenylalanine (fMLP) in vitro. Inhibits ELANE-mediated potentiation of platelet aggregation induced by CTSG in the host. Does not affect CTSG- or collagen-induced platelet aggregation. Blocks cleavage of tissue factor pathway inhibitor (TFPI) by ELANE in the host. Inhibits neutrophil-induced coagulation in the host by interfering with neutrophil extracellular traps (NET) formation. Exhibits anti-inflammatory activity. Reduces ischemia-induced activation of MAPK and NF-kappa-B pathways in the host. Decreases CCL2 and IL8 production in IL4- or lipopolysaccharide (LPS)-stimulated host epithelial cells. Reduces caspase-3 (CASP3)-dependent apoptosis in damaged host tissues. The polypeptide is Agaphelin (Anopheles gambiae (African malaria mosquito)).